The sequence spans 319 residues: Ribosomal RNA small subunit methyltransferase H (319 aa).

S-adenosyl-L-methionine is bound by residues 37 to 39 (GGY), Asp57, Phe96, Asp105, and Gln112. A compositionally biased stretch (basic and acidic residues) spans 292 to 302 (RPDEREKERNP). The disordered stretch occupies residues 292–319 (RPDEREKERNPRSRSARLRAVEKQGVPA).

This sequence belongs to the methyltransferase superfamily. RsmH family.

It is found in the cytoplasm. It catalyses the reaction cytidine(1402) in 16S rRNA + S-adenosyl-L-methionine = N(4)-methylcytidine(1402) in 16S rRNA + S-adenosyl-L-homocysteine + H(+). Its function is as follows. Specifically methylates the N4 position of cytidine in position 1402 (C1402) of 16S rRNA. This chain is Ribosomal RNA small subunit methyltransferase H, found in Syntrophobacter fumaroxidans (strain DSM 10017 / MPOB).